The following is a 545-amino-acid chain: Bifunctional purine biosynthesis protein PurH (545 aa).

Positions 1 to 150 (MTNTNRPIRR…KNHATVAIVT (150 aa)) constitute an MGS-like domain.

Belongs to the PurH family.

It carries out the reaction (6R)-10-formyltetrahydrofolate + 5-amino-1-(5-phospho-beta-D-ribosyl)imidazole-4-carboxamide = 5-formamido-1-(5-phospho-D-ribosyl)imidazole-4-carboxamide + (6S)-5,6,7,8-tetrahydrofolate. The enzyme catalyses IMP + H2O = 5-formamido-1-(5-phospho-D-ribosyl)imidazole-4-carboxamide. Its pathway is purine metabolism; IMP biosynthesis via de novo pathway; 5-formamido-1-(5-phospho-D-ribosyl)imidazole-4-carboxamide from 5-amino-1-(5-phospho-D-ribosyl)imidazole-4-carboxamide (10-formyl THF route): step 1/1. It participates in purine metabolism; IMP biosynthesis via de novo pathway; IMP from 5-formamido-1-(5-phospho-D-ribosyl)imidazole-4-carboxamide: step 1/1. The chain is Bifunctional purine biosynthesis protein PurH from Bifidobacterium longum (strain DJO10A).